A 587-amino-acid polypeptide reads, in one-letter code: Aspartate--tRNA ligase (587 aa).

Residue glutamate 174 coordinates L-aspartate. The tract at residues 198-201 (QITK) is aspartate. Residue arginine 220 coordinates L-aspartate. ATP contacts are provided by residues 220 to 222 (RDE) and glutamine 229. Histidine 443 lines the L-aspartate pocket. Residue glutamate 477 coordinates ATP. Arginine 484 contributes to the L-aspartate binding site. ATP is bound at residue 529–532 (GLDR).

This sequence belongs to the class-II aminoacyl-tRNA synthetase family. Type 1 subfamily. Homodimer.

Its subcellular location is the cytoplasm. The catalysed reaction is tRNA(Asp) + L-aspartate + ATP = L-aspartyl-tRNA(Asp) + AMP + diphosphate. Functionally, catalyzes the attachment of L-aspartate to tRNA(Asp) in a two-step reaction: L-aspartate is first activated by ATP to form Asp-AMP and then transferred to the acceptor end of tRNA(Asp). The protein is Aspartate--tRNA ligase of Streptococcus pneumoniae (strain ATCC 700669 / Spain 23F-1).